The following is a 200-amino-acid chain: dITP/XTP pyrophosphatase (200 aa).

Residue 7–12 (TSNKHK) participates in substrate binding. 2 residues coordinate Mg(2+): Glu38 and Asp73. The active-site Proton acceptor is the Asp73. Residues Ser74, 154–157 (FGYD), Lys177, and 182–183 (HR) each bind substrate.

The protein belongs to the HAM1 NTPase family. Homodimer. Requires Mg(2+) as cofactor.

It catalyses the reaction XTP + H2O = XMP + diphosphate + H(+). The catalysed reaction is dITP + H2O = dIMP + diphosphate + H(+). The enzyme catalyses ITP + H2O = IMP + diphosphate + H(+). Pyrophosphatase that catalyzes the hydrolysis of nucleoside triphosphates to their monophosphate derivatives, with a high preference for the non-canonical purine nucleotides XTP (xanthosine triphosphate), dITP (deoxyinosine triphosphate) and ITP. Seems to function as a house-cleaning enzyme that removes non-canonical purine nucleotides from the nucleotide pool, thus preventing their incorporation into DNA/RNA and avoiding chromosomal lesions. The sequence is that of dITP/XTP pyrophosphatase from Campylobacter jejuni subsp. doylei (strain ATCC BAA-1458 / RM4099 / 269.97).